A 452-amino-acid chain; its full sequence is NADH-ubiquinone oxidoreductase chain 4 (452 aa).

Helical transmembrane passes span 4–24, 29–49, 59–79, 88–110, 114–136, 144–164, 182–202, 221–241, 252–272, 282–304, 309–331, 345–365, 390–410, and 432–452; these read LVLG…SMVW, VGSV…MTIS, FVSL…LLAS, LIYQ…LAFM, LLLF…TRWG, AGTY…ICLI, VFQL…AFLV, PIAG…YGMM, MLSS…MGGI, LIAY…GVAW, AMVL…NLWY, LIMI…MNMA, IVYM…LFGM, and LLTT…GLMF.

It belongs to the complex I subunit 4 family.

The protein resides in the mitochondrion membrane. The catalysed reaction is a ubiquinone + NADH + 5 H(+)(in) = a ubiquinol + NAD(+) + 4 H(+)(out). Its function is as follows. Core subunit of the mitochondrial membrane respiratory chain NADH dehydrogenase (Complex I) that is believed to belong to the minimal assembly required for catalysis. Complex I functions in the transfer of electrons from NADH to the respiratory chain. The immediate electron acceptor for the enzyme is believed to be ubiquinone. The polypeptide is NADH-ubiquinone oxidoreductase chain 4 (ND4) (Branchiostoma floridae (Florida lancelet)).